Reading from the N-terminus, the 274-residue chain is MAIVKCKPTSPGRRHVVKVVNPELHKGKPYAPLLEKNSKSGGRNNNGRITTRHIGGGHKQAYRIVDFKRNKDGIPATVERLEYDPNRSANIALVLYADGERRYILAPKGLKAGDKVQSGVDAAIKTGNTLPMRNIPVGSTVHNVEMKPGKGGQLARSAGTYVQIVARDGAYVTIRLRSGEMRKIPSDCRATIGEVGNSEHMLRVLGKAGASRWRGIRPTVRGTAMNPVDHPHGGGEGRNFGKHPVTPWGVQTKGKKTRKNKRTEHFIVHRRTKK.

Disordered regions lie at residues 28 to 53 (KPYA…TTRH) and 221 to 274 (RGTA…RTKK). Over residues 39–48 (KSGGRNNNGR) the composition is skewed to low complexity. Residues 253 to 274 (KGKKTRKNKRTEHFIVHRRTKK) show a composition bias toward basic residues.

It belongs to the universal ribosomal protein uL2 family. Part of the 50S ribosomal subunit. Forms a bridge to the 30S subunit in the 70S ribosome.

Functionally, one of the primary rRNA binding proteins. Required for association of the 30S and 50S subunits to form the 70S ribosome, for tRNA binding and peptide bond formation. It has been suggested to have peptidyltransferase activity; this is somewhat controversial. Makes several contacts with the 16S rRNA in the 70S ribosome. This chain is Large ribosomal subunit protein uL2, found in Proteus mirabilis (strain HI4320).